A 520-amino-acid polypeptide reads, in one-letter code: J protein JJJ2 (520 aa).

The 65-residue stretch at 7 to 71 (TYYSVLGLPT…SSKQEYDAIL (65 aa)) folds into the J domain. 2 disordered regions span residues 82 to 257 (LGYK…DLQN) and 389 to 409 (FESS…RGRP). The segment covering 91–100 (QNQSNNLNQQ) has biased composition (low complexity). Polar residues predominate over residues 152 to 182 (TSKNSKEQQGSQETTNTSENLQRNAKGNKNN). Residues 397 to 409 (ENHRSDFNLRGRP) show a composition bias toward basic and acidic residues.

The protein localises to the cytoplasm. The protein resides in the nucleus. This is J protein JJJ2 (JJJ2) from Vanderwaltozyma polyspora (strain ATCC 22028 / DSM 70294 / BCRC 21397 / CBS 2163 / NBRC 10782 / NRRL Y-8283 / UCD 57-17) (Kluyveromyces polysporus).